Here is a 374-residue protein sequence, read N- to C-terminus: Chaperone protein DnaJ (374 aa).

The region spanning 4-68 (DYYEILGVSR…EMKARFDRFG (65 aa)) is the J domain. Residues 132-214 (GGDKELTIKH…CGGRGQKEAT (83 aa)) form a CR-type zinc finger. Positions 145, 148, 162, 165, 188, 191, 202, and 205 each coordinate Zn(2+). CXXCXGXG motif repeat units follow at residues 145 to 152 (CGTCNGSG), 162 to 169 (CSTCGGTG), 188 to 195 (CPSCNGSG), and 202 to 209 (CVDCGGRG).

This sequence belongs to the DnaJ family. As to quaternary structure, homodimer. The cofactor is Zn(2+).

The protein localises to the cytoplasm. Participates actively in the response to hyperosmotic and heat shock by preventing the aggregation of stress-denatured proteins and by disaggregating proteins, also in an autonomous, DnaK-independent fashion. Unfolded proteins bind initially to DnaJ; upon interaction with the DnaJ-bound protein, DnaK hydrolyzes its bound ATP, resulting in the formation of a stable complex. GrpE releases ADP from DnaK; ATP binding to DnaK triggers the release of the substrate protein, thus completing the reaction cycle. Several rounds of ATP-dependent interactions between DnaJ, DnaK and GrpE are required for fully efficient folding. Also involved, together with DnaK and GrpE, in the DNA replication of plasmids through activation of initiation proteins. This Trichodesmium erythraeum (strain IMS101) protein is Chaperone protein DnaJ.